Here is a 379-residue protein sequence, read N- to C-terminus: 1-deoxy-D-xylulose 5-phosphate reductoisomerase (379 aa).

NADPH-binding residues include Thr-10, Gly-11, Ser-12, Ile-13, Gly-36, Asn-38, and Asn-121. Lys-122 lines the 1-deoxy-D-xylulose 5-phosphate pocket. Glu-123 provides a ligand contact to NADPH. Asp-147 is a Mn(2+) binding site. Residues Ser-148, Glu-149, Ser-173, and His-196 each contribute to the 1-deoxy-D-xylulose 5-phosphate site. Glu-149 lines the Mn(2+) pocket. Gly-202 serves as a coordination point for NADPH. 1-deoxy-D-xylulose 5-phosphate contacts are provided by Ser-209, Asn-214, Lys-215, and Glu-218. Glu-218 contributes to the Mn(2+) binding site.

The protein belongs to the DXR family. The cofactor is Mg(2+). Mn(2+) serves as cofactor.

It catalyses the reaction 2-C-methyl-D-erythritol 4-phosphate + NADP(+) = 1-deoxy-D-xylulose 5-phosphate + NADPH + H(+). It participates in isoprenoid biosynthesis; isopentenyl diphosphate biosynthesis via DXP pathway; isopentenyl diphosphate from 1-deoxy-D-xylulose 5-phosphate: step 1/6. In terms of biological role, catalyzes the NADPH-dependent rearrangement and reduction of 1-deoxy-D-xylulose-5-phosphate (DXP) to 2-C-methyl-D-erythritol 4-phosphate (MEP). The protein is 1-deoxy-D-xylulose 5-phosphate reductoisomerase of Shouchella clausii (strain KSM-K16) (Alkalihalobacillus clausii).